Reading from the N-terminus, the 159-residue chain is NADH-quinone oxidoreductase subunit I (159 aa).

4Fe-4S ferredoxin-type domains follow at residues 51 to 80 (RRYE…IEAD) and 90 to 119 (TRYD…EGPN). Residues cysteine 60, cysteine 63, cysteine 66, cysteine 70, cysteine 99, cysteine 102, cysteine 105, and cysteine 109 each contribute to the [4Fe-4S] cluster site.

The protein belongs to the complex I 23 kDa subunit family. As to quaternary structure, NDH-1 is composed of 14 different subunits. Subunits NuoA, H, J, K, L, M, N constitute the membrane sector of the complex. Requires [4Fe-4S] cluster as cofactor.

Its subcellular location is the cell inner membrane. It carries out the reaction a quinone + NADH + 5 H(+)(in) = a quinol + NAD(+) + 4 H(+)(out). Its function is as follows. NDH-1 shuttles electrons from NADH, via FMN and iron-sulfur (Fe-S) centers, to quinones in the respiratory chain. The immediate electron acceptor for the enzyme in this species is believed to be ubiquinone. Couples the redox reaction to proton translocation (for every two electrons transferred, four hydrogen ions are translocated across the cytoplasmic membrane), and thus conserves the redox energy in a proton gradient. The protein is NADH-quinone oxidoreductase subunit I of Rickettsia peacockii (strain Rustic).